The sequence spans 670 residues: Solute carrier organic anion transporter family member 1A4 (670 aa).

Residues M1–K20 lie on the Cytoplasmic side of the membrane. The chain crosses the membrane as a helical span at residues A21–M40. Residues N41–G59 lie on the Extracellular side of the membrane. A helical membrane pass occupies residues L60–G80. Residues T81–P86 lie on the Cytoplasmic side of the membrane. Residues I87–G111 form a helical membrane-spanning segment. At R112–S155 the chain is on the extracellular side. N-linked (GlcNAc...) asparagine glycans are attached at residues N124 and N135. Residues L156–E184 traverse the membrane as a helical segment. Residues D185–M203 lie on the Cytoplasmic side of the membrane. Residues T204–T224 form a helical membrane-spanning segment. The Extracellular segment spans residues G225 to V242. Residues G243 to P267 traverse the membrane as a helical segment. The Cytoplasmic segment spans residues K268–S311. A helical membrane pass occupies residues L312–I333. The Extracellular segment spans residues N334–E353. The chain crosses the membrane as a helical span at residues I354–M377. At K378–K381 the chain is on the cytoplasmic side. The chain crosses the membrane as a helical span at residues I382–S405. Residues Y406–F513 are Extracellular-facing. The 56-residue stretch at N433–Q488 folds into the Kazal-like domain. Cystine bridges form between C439/C469, C445/C465, and C454/C486. 2 N-linked (GlcNAc...) asparagine glycosylation sites follow: N483 and N492. Residues L514–L536 form a helical membrane-spanning segment. Residues R537–S545 are Cytoplasmic-facing. The chain crosses the membrane as a helical span at residues L546–I571. The Extracellular portion of the chain corresponds to D572–P605. A helical membrane pass occupies residues A606–M623. Residues R624 to L670 lie on the Cytoplasmic side of the membrane. Phosphoserine is present on residues S634 and S635. The segment at S649–L670 is disordered. The segment covering C651–N662 has biased composition (polar residues).

This sequence belongs to the organo anion transporter (TC 2.A.60) family. As to expression, highly expressed in brain and liver. Detected at very low levels in heart and lung.

It localises to the cell membrane. The catalysed reaction is estrone 3-sulfate(out) = estrone 3-sulfate(in). It catalyses the reaction taurocholate(out) = taurocholate(in). The enzyme catalyses prostaglandin E2(out) = prostaglandin E2(in). It carries out the reaction L-thyroxine(out) = L-thyroxine(in). Mediates the Na(+)-independent transport of organic anions such as taurocholate, cholate, 17-beta-glucuronosyl estradiol, prostaglandin E2, estrone 3-sulfate, L-thyroxine (T4), the cardiac glycosides ouabain and digoxin and thyroid hormones. Shows a pH-sensitive substrate specificity which may be ascribed to the protonation state of the binding site and leads to a stimulation of substrate transport in an acidic microenvironment. Hydrogencarbonate/HCO3(-) acts as the probable counteranion that exchanges for organic anions. In Mus musculus (Mouse), this protein is Solute carrier organic anion transporter family member 1A4 (Slco1a4).